Reading from the N-terminus, the 124-residue chain is Profilin-2 (124 aa).

The protein belongs to the profilin family. Occurs in many kinds of cells as a complex with monomeric actin in a 1:1 ratio. Interacts with forH.

Its subcellular location is the cytoplasm. The protein resides in the cytoskeleton. Binds to actin and affects the structure of the cytoskeleton. At high concentrations, profilin prevents the polymerization of actin, whereas it enhances it at low concentrations. By binding to PIP2, it inhibits the formation of IP3 and DG. In Dictyostelium discoideum (Social amoeba), this protein is Profilin-2 (proB).